Reading from the N-terminus, the 865-residue chain is cGMP-specific 3',5'-cyclic phosphodiesterase (865 aa).

Residues 69-83 (CSCSSQQSSRADSSA) show a composition bias toward low complexity. The interval 69–92 (CSCSSQQSSRADSSAPGTPTRKIS) is disordered. Residue serine 92 is modified to Phosphoserine. 2 consecutive GAF domains span residues 154–304 (DVTA…GIVL) and 336–493 (SLEV…GLGI). The PDEase domain occupies 526-850 (ETKELQSLAA…QKWQALAEQQ (325 aa)). Catalysis depends on histidine 603, which acts as the Proton donor. Positions 607, 643, 644, and 754 each coordinate Zn(2+). Aspartate 644 contributes to the Mg(2+) binding site. Glutamine 807 lines the 3',5'-cyclic GMP pocket.

This sequence belongs to the cyclic nucleotide phosphodiesterase family. Zn(2+) is required as a cofactor. The cofactor is Mg(2+). In terms of processing, phosphorylation is regulated by binding of cGMP to the two allosteric sites. Phosphorylation by PRKG1 leads to its activation. As to expression, isoform PDE5A1 and isoform PDE5A2 are highly expressed in the cerebellum, hippocampus, retina, lung, heart, spleen, and thoracic artery. Isoform PDE5A1, but not isoform PDE5A2, is also abundantly expressed in the pylorus.

It is found in the cytoplasm. Its subcellular location is the cytosol. The catalysed reaction is 3',5'-cyclic GMP + H2O = GMP + H(+). The protein operates within purine metabolism; 3',5'-cyclic GMP degradation; GMP from 3',5'-cyclic GMP: step 1/1. With respect to regulation, inhibited by zaprinast. Functionally, plays a role in signal transduction by regulating the intracellular concentration of cyclic nucleotides. This phosphodiesterase catalyzes the specific hydrolysis of cGMP to 5'-GMP. Specifically regulates nitric-oxide-generated cGMP. This chain is cGMP-specific 3',5'-cyclic phosphodiesterase (PDE5A), found in Canis lupus familiaris (Dog).